A 504-amino-acid polypeptide reads, in one-letter code: L-amino-acid oxidase (504 aa).

Residues 1–18 form the signal peptide; it reads MNIFFMFSLLFLATLGSC. A disulfide bond links Cys-28 and Cys-191. Residues 61–62, 81–82, Arg-89, and 105–108 contribute to the FAD site; these read MS, EA, and GPMR. Position 108 (Arg-108) interacts with substrate. A glycan (N-linked (GlcNAc...) asparagine) is linked at Asn-190. His-241 provides a ligand contact to substrate. Val-279 lines the FAD pocket. An intrachain disulfide couples Cys-349 to Cys-430. An N-linked (GlcNAc...) asparagine glycan is attached at Asn-379. Tyr-390 is a substrate binding site. Residues Glu-475 and 482 to 487 each bind FAD; that span reads GWIDST. Position 482–483 (482–483) interacts with substrate; it reads GW.

The protein belongs to the flavin monoamine oxidase family. FIG1 subfamily. Homodimer; non-covalently linked. It depends on FAD as a cofactor. In terms of tissue distribution, expressed by the venom gland.

It is found in the secreted. The enzyme catalyses an L-alpha-amino acid + O2 + H2O = a 2-oxocarboxylate + H2O2 + NH4(+). Functionally, catalyzes an oxidative deamination of predominantly hydrophobic and aromatic L-amino acids, thus producing hydrogen peroxide that may contribute to the diverse toxic effects of this enzyme. Exhibits diverse biological activities, such as hemorrhage, hemolysis, edema, apoptosis of vascular endothelial cells or tumor cell lines, antibacterial and antiparasitic activities, as well as regulation of platelet aggregation. Its effect on platelets is controversial, since it either induces aggregation or inhibits agonist-induced aggregation. These different effects are probably due to different experimental conditions. The protein is L-amino-acid oxidase of Echis ocellatus (Ocellated saw-scaled viper).